A 193-amino-acid chain; its full sequence is Acyl carrier protein phosphodiesterase (193 aa).

It belongs to the AcpH family.

The catalysed reaction is holo-[ACP] + H2O = apo-[ACP] + (R)-4'-phosphopantetheine + H(+). Converts holo-ACP to apo-ACP by hydrolytic cleavage of the phosphopantetheine prosthetic group from ACP. The protein is Acyl carrier protein phosphodiesterase of Escherichia coli O157:H7.